Here is a 449-residue protein sequence, read N- to C-terminus: 8-oxoguanine deaminase (449 aa).

Zn(2+)-binding residues include histidine 64 and histidine 66. Substrate is bound at residue glutamine 69. Histidine 232 contributes to the Zn(2+) binding site. Positions 235 and 269 each coordinate substrate. 2 residues coordinate Zn(2+): histidine 269 and aspartate 320.

Belongs to the metallo-dependent hydrolases superfamily. ATZ/TRZ family. Homodimer. Requires Zn(2+) as cofactor.

It carries out the reaction 8-oxoguanine + H2O + H(+) = urate + NH4(+). It participates in purine metabolism. In terms of biological role, specifically deaminates 8-Oxoguanine (8-oxoG) to uric acid. 8-oxoG is formed via the oxidation of guanine within DNA by reactive oxygen species and leads, if uncorrected, to the incorporation of 8-oxoG:A mismatches and eventually to G:C to T:A transversions. This chain is 8-oxoguanine deaminase, found in Pseudomonas aeruginosa (strain ATCC 15692 / DSM 22644 / CIP 104116 / JCM 14847 / LMG 12228 / 1C / PRS 101 / PAO1).